The following is a 338-amino-acid chain: Ketol-acid reductoisomerase (NADP(+)) (338 aa).

A KARI N-terminal Rossmann domain is found at methionine 1–threonine 181. NADP(+) is bound by residues tyrosine 24 to glutamine 27, arginine 47, serine 50, serine 52, and aspartate 82 to glutamine 85. Histidine 107 is a catalytic residue. Glycine 133 contributes to the NADP(+) binding site. The 146-residue stretch at threonine 182–isoleucine 327 folds into the KARI C-terminal knotted domain. Mg(2+)-binding residues include aspartate 190, glutamate 194, glutamate 226, and glutamate 230. Residue serine 251 coordinates substrate.

Belongs to the ketol-acid reductoisomerase family. Requires Mg(2+) as cofactor.

The enzyme catalyses (2R)-2,3-dihydroxy-3-methylbutanoate + NADP(+) = (2S)-2-acetolactate + NADPH + H(+). The catalysed reaction is (2R,3R)-2,3-dihydroxy-3-methylpentanoate + NADP(+) = (S)-2-ethyl-2-hydroxy-3-oxobutanoate + NADPH + H(+). It functions in the pathway amino-acid biosynthesis; L-isoleucine biosynthesis; L-isoleucine from 2-oxobutanoate: step 2/4. It participates in amino-acid biosynthesis; L-valine biosynthesis; L-valine from pyruvate: step 2/4. Its function is as follows. Involved in the biosynthesis of branched-chain amino acids (BCAA). Catalyzes an alkyl-migration followed by a ketol-acid reduction of (S)-2-acetolactate (S2AL) to yield (R)-2,3-dihydroxy-isovalerate. In the isomerase reaction, S2AL is rearranged via a Mg-dependent methyl migration to produce 3-hydroxy-3-methyl-2-ketobutyrate (HMKB). In the reductase reaction, this 2-ketoacid undergoes a metal-dependent reduction by NADPH to yield (R)-2,3-dihydroxy-isovalerate. The polypeptide is Ketol-acid reductoisomerase (NADP(+)) (Hahella chejuensis (strain KCTC 2396)).